The primary structure comprises 280 residues: uncharacterized protein (280 aa).

Positions 1 to 21 are cleaved as a signal peptide; it reads MRPVIKVGLSTASVYPLRAEA.

It to M.tuberculosis Rv0498 and S.coelicolor SCO3347.

This is an uncharacterized protein from Mycobacterium leprae (strain TN).